The sequence spans 776 residues: Lysyl oxidase homolog 2 (776 aa).

Positions 1–25 (MELHFGSCLSGCLALLVLLPSLSLA) are cleaved as a signal peptide. SRCR domains lie at 61-162 (VRLA…VVCS), 191-305 (IRPI…VSCV), 329-428 (VRLR…VRCN), and 438-546 (VRLN…VACS). 9 disulfide bridges follow: Cys-87–Cys-151, Cys-100–Cys-161, Cys-131–Cys-141, Cys-221–Cys-294, Cys-234–Cys-304, Cys-268–Cys-278, Cys-354–Cys-417, Cys-367–Cys-427, and Cys-398–Cys-408. The N-linked (GlcNAc...) asparagine glycan is linked to Asn-267. N-linked (GlcNAc...) asparagine glycosylation is present at Asn-291. Asn-458 is a glycosylation site (N-linked (GlcNAc...) asparagine). 3 disulfides stabilise this stretch: Cys-467-Cys-532, Cys-480-Cys-545, and Cys-514-Cys-524. The segment at 550–753 (PDLVLNAEIV…WMYNCHVGGA (204 aa)) is lysyl-oxidase like. Ca(2+) is bound by residues Asp-551 and Leu-552. Intrachain disulfides connect Cys-575–Cys-627, Cys-581–Cys-697, Cys-659–Cys-675, and Cys-665–Cys-687. 3 residues coordinate Cu cation: His-628, His-630, and His-632. N-linked (GlcNAc...) asparagine glycosylation occurs at Asn-646. Residues 655–691 (KASFCLEDTECEGDIQKSYECANFGEQGITMGCWDMY) constitute a cross-link (lysine tyrosylquinone (Lys-Tyr)). 2',4',5'-topaquinone is present on Tyr-691. The Ca(2+) site is built by Glu-724, Asp-726, Asn-729, and Asn-730. Cys-734 and Cys-748 are disulfide-bonded.

Belongs to the lysyl oxidase family. Component of some chromatin repressor complex. Interacts with SNAI1. Interacts with TAF10. Interacts with HSPA5. Interacts with EFEMP2. Cu cation is required as a cofactor. The cofactor is lysine tyrosylquinone residue. The lysine tyrosylquinone cross-link (LTQ) is generated by condensation of the epsilon-amino group of a lysine with a topaquinone produced by oxidation of tyrosine. In terms of processing, N-glycosylated. N-glycosylation on Asn-458 and Asn-646 may be essential for proper folding and secretion; may be composed of a fucosylated carbohydrates attached to a trimannose N-linked glycan core. Ubiquitous. Highest expression in skin, lung and thymus. Present in chondrocytes: mainly expressed by chondrocytes in healing fractures and in epiphyseal growth plates (at protein level).

The protein resides in the secreted. It localises to the extracellular space. Its subcellular location is the extracellular matrix. It is found in the basement membrane. The protein localises to the nucleus. The protein resides in the chromosome. It localises to the endoplasmic reticulum. The enzyme catalyses L-lysyl-[protein] + O2 + H2O = (S)-2-amino-6-oxohexanoyl-[protein] + H2O2 + NH4(+). Its activity is regulated as follows. Specifically inhibited by a mouse monoclonal antibody AB0023, inhibition occurs in a non-competitive manner. Its function is as follows. Mediates the post-translational oxidative deamination of lysine residues on target proteins leading to the formation of deaminated lysine (allysine). Acts as a transcription corepressor and specifically mediates deamination of trimethylated 'Lys-4' of histone H3 (H3K4me3), a specific tag for epigenetic transcriptional activation. Shows no activity against histone H3 when it is trimethylated on 'Lys-9' (H3K9me3) or 'Lys-27' (H3K27me3) or when 'Lys-4' is monomethylated (H3K4me1) or dimethylated (H3K4me2). Also mediates deamination of methylated TAF10, a member of the transcription factor IID (TFIID) complex, which induces release of TAF10 from promoters, leading to inhibition of TFIID-dependent transcription. LOXL2-mediated deamination of TAF10 results in transcriptional repression of genes required for embryonic stem cell pluripotency including POU5F1/OCT4, NANOG, KLF4 and SOX2. Involved in epithelial to mesenchymal transition (EMT) via interaction with SNAI1 and participates in repression of E-cadherin, probably by mediating deamination of histone H3. During EMT, involved with SNAI1 in negatively regulating pericentromeric heterochromatin transcription. SNAI1 recruits LOXL2 to pericentromeric regions to oxidize histone H3 and repress transcription which leads to release of heterochromatin component CBX5/HP1A, enabling chromatin reorganization and acquisition of mesenchymal traits. Interacts with the endoplasmic reticulum protein HSPA5 which activates the IRE1-XBP1 pathway of the unfolded protein response, leading to expression of several transcription factors involved in EMT and subsequent EMT induction. When secreted into the extracellular matrix, promotes cross-linking of extracellular matrix proteins by mediating oxidative deamination of peptidyl lysine residues in precursors to fibrous collagen and elastin. Acts as a regulator of sprouting angiogenesis, probably via collagen IV scaffolding. Acts as a regulator of chondrocyte differentiation, probably by regulating expression of factors that control chondrocyte differentiation. The sequence is that of Lysyl oxidase homolog 2 (Loxl2) from Mus musculus (Mouse).